A 635-amino-acid chain; its full sequence is Threonine--tRNA ligase (635 aa).

Residues 1-61 enclose the TGS domain; it reads MVSIRLPDGS…DRDASLAIVT (61 aa). A catalytic region spans residues 242 to 533; that stretch reads DHRKLGKQLD…LIEHHAGAMP (292 aa). Zn(2+) is bound by residues Cys-333, His-384, and His-510.

It belongs to the class-II aminoacyl-tRNA synthetase family. As to quaternary structure, homodimer. The cofactor is Zn(2+).

Its subcellular location is the cytoplasm. It catalyses the reaction tRNA(Thr) + L-threonine + ATP = L-threonyl-tRNA(Thr) + AMP + diphosphate + H(+). Its function is as follows. Catalyzes the attachment of threonine to tRNA(Thr) in a two-step reaction: L-threonine is first activated by ATP to form Thr-AMP and then transferred to the acceptor end of tRNA(Thr). Also edits incorrectly charged L-seryl-tRNA(Thr). The sequence is that of Threonine--tRNA ligase from Burkholderia vietnamiensis (strain G4 / LMG 22486) (Burkholderia cepacia (strain R1808)).